The primary structure comprises 188 residues: Viral FLICE protein (188 aa).

2 consecutive DED domains span residues 2–74 (ATYE…DLLH) and 93–169 (PYQL…QVQT).

In terms of assembly, interacts with host RIPK1, TRAF2, MAP3K14, IKBKB, and IKBKG. Interacts with host CADM1; this interaction is essential for chronic NF-kappa-B activation.

In terms of biological role, plays a role in the modulation of host signaling pathways by acting as an activator of both the classic and the alternative NF-kappa-B pathways. Thereby, initiates an important range of cellular processes to promote cell survival, proliferation and protection from apoptosis. This is Viral FLICE protein (ORF71) from Human herpesvirus 8 type P (isolate GK18) (HHV-8).